Reading from the N-terminus, the 176-residue chain is Small ribosomal subunit protein uS5 (176 aa).

Positions 11–74 (LSEVLVDVNR…QAAKKRMMKV (64 aa)) constitute an S5 DRBM domain.

It belongs to the universal ribosomal protein uS5 family. Part of the 30S ribosomal subunit. Contacts proteins S4 and S8.

Functionally, with S4 and S12 plays an important role in translational accuracy. Located at the back of the 30S subunit body where it stabilizes the conformation of the head with respect to the body. The chain is Small ribosomal subunit protein uS5 from Rickettsia conorii (strain ATCC VR-613 / Malish 7).